We begin with the raw amino-acid sequence, 352 residues long: UDP-N-acetylglucosamine--N-acetylmuramyl-(pentapeptide) pyrophosphoryl-undecaprenol N-acetylglucosamine transferase 3 (352 aa).

UDP-N-acetyl-alpha-D-glucosamine is bound by residues 11–13 (SAG), Arg-164, Ser-194, and Gln-289.

Belongs to the glycosyltransferase 28 family. MurG subfamily.

The protein resides in the cell membrane. It catalyses the reaction di-trans,octa-cis-undecaprenyl diphospho-N-acetyl-alpha-D-muramoyl-L-alanyl-D-glutamyl-meso-2,6-diaminopimeloyl-D-alanyl-D-alanine + UDP-N-acetyl-alpha-D-glucosamine = di-trans,octa-cis-undecaprenyl diphospho-[N-acetyl-alpha-D-glucosaminyl-(1-&gt;4)]-N-acetyl-alpha-D-muramoyl-L-alanyl-D-glutamyl-meso-2,6-diaminopimeloyl-D-alanyl-D-alanine + UDP + H(+). Its pathway is cell wall biogenesis; peptidoglycan biosynthesis. Functionally, cell wall formation. Catalyzes the transfer of a GlcNAc subunit on undecaprenyl-pyrophosphoryl-MurNAc-pentapeptide (lipid intermediate I) to form undecaprenyl-pyrophosphoryl-MurNAc-(pentapeptide)GlcNAc (lipid intermediate II). In Bacillus thuringiensis (strain Al Hakam), this protein is UDP-N-acetylglucosamine--N-acetylmuramyl-(pentapeptide) pyrophosphoryl-undecaprenol N-acetylglucosamine transferase 3.